The following is a 139-amino-acid chain: D-ribose pyranase (139 aa).

The Proton donor role is filled by His-20. Residues Asp-28, His-106, and 128 to 130 contribute to the substrate site; that span reads YAN.

It belongs to the RbsD / FucU family. RbsD subfamily. Homodecamer.

The protein resides in the cytoplasm. The catalysed reaction is beta-D-ribopyranose = beta-D-ribofuranose. The protein operates within carbohydrate metabolism; D-ribose degradation; D-ribose 5-phosphate from beta-D-ribopyranose: step 1/2. Catalyzes the interconversion of beta-pyran and beta-furan forms of D-ribose. This chain is D-ribose pyranase, found in Vibrio parahaemolyticus serotype O3:K6 (strain RIMD 2210633).